Reading from the N-terminus, the 402-residue chain is Diaminopimelate decarboxylase (402 aa).

K61 is modified (N6-(pyridoxal phosphate)lysine). Residues G233 and 269–272 contribute to the pyridoxal 5'-phosphate site; that span reads EPGR. R272, R304, Y308, E334, and Y360 together coordinate substrate. Residue Y360 coordinates pyridoxal 5'-phosphate.

This sequence belongs to the Orn/Lys/Arg decarboxylase class-II family. LysA subfamily. In terms of assembly, homodimer. The cofactor is pyridoxal 5'-phosphate.

The enzyme catalyses meso-2,6-diaminopimelate + H(+) = L-lysine + CO2. It participates in amino-acid biosynthesis; L-lysine biosynthesis via DAP pathway; L-lysine from DL-2,6-diaminopimelate: step 1/1. Functionally, specifically catalyzes the decarboxylation of meso-diaminopimelate (meso-DAP) to L-lysine. The sequence is that of Diaminopimelate decarboxylase from Thermoplasma acidophilum (strain ATCC 25905 / DSM 1728 / JCM 9062 / NBRC 15155 / AMRC-C165).